A 291-amino-acid chain; its full sequence is 4-hydroxy-tetrahydrodipicolinate synthase (291 aa).

T44 contacts pyruvate. Residue Y132 is the Proton donor/acceptor of the active site. K160 (schiff-base intermediate with substrate) is an active-site residue. I202 contributes to the pyruvate binding site.

Belongs to the DapA family. Homotetramer; dimer of dimers.

The protein localises to the cytoplasm. It carries out the reaction L-aspartate 4-semialdehyde + pyruvate = (2S,4S)-4-hydroxy-2,3,4,5-tetrahydrodipicolinate + H2O + H(+). It participates in amino-acid biosynthesis; L-lysine biosynthesis via DAP pathway; (S)-tetrahydrodipicolinate from L-aspartate: step 3/4. In terms of biological role, catalyzes the condensation of (S)-aspartate-beta-semialdehyde [(S)-ASA] and pyruvate to 4-hydroxy-tetrahydrodipicolinate (HTPA). The sequence is that of 4-hydroxy-tetrahydrodipicolinate synthase from Parvibaculum lavamentivorans (strain DS-1 / DSM 13023 / NCIMB 13966).